A 275-amino-acid chain; its full sequence is DNA repair protein RecO (275 aa).

Positions 1 to 38 are disordered; that stretch reads MTDEADADPQPFAAPPATGAPAADKPARKPRRAAPRTS. Positions 8-24 are enriched in low complexity; sequence DPQPFAAPPATGAPAAD.

Belongs to the RecO family.

Functionally, involved in DNA repair and RecF pathway recombination. The polypeptide is DNA repair protein RecO (Burkholderia pseudomallei (strain 1710b)).